Reading from the N-terminus, the 188-residue chain is Elongation factor P (188 aa).

Belongs to the elongation factor P family.

The protein resides in the cytoplasm. It participates in protein biosynthesis; polypeptide chain elongation. Its function is as follows. Involved in peptide bond synthesis. Stimulates efficient translation and peptide-bond synthesis on native or reconstituted 70S ribosomes in vitro. Probably functions indirectly by altering the affinity of the ribosome for aminoacyl-tRNA, thus increasing their reactivity as acceptors for peptidyl transferase. The sequence is that of Elongation factor P from Natranaerobius thermophilus (strain ATCC BAA-1301 / DSM 18059 / JW/NM-WN-LF).